Here is a 63-residue protein sequence, read N- to C-terminus: Large ribosomal subunit protein bL28 (63 aa).

It belongs to the bacterial ribosomal protein bL28 family.

The sequence is that of Large ribosomal subunit protein bL28 from Symbiobacterium thermophilum (strain DSM 24528 / JCM 14929 / IAM 14863 / T).